The primary structure comprises 151 residues: MRVWVDADACPNMIKEVLFRAAQRRKVQVTLVANQPLKVIPSPFIKAIQVSAGFDVADNYIVEQVEAGDLIITADIPLAAEAIEKGGLVISPRGELLTAENIRPRLNMRDFLEQMRSSGEHTGGPAALTANDKQAFANALDRLITKGLKDS.

This sequence belongs to the UPF0178 family.

The protein is UPF0178 protein Sde_3033 of Saccharophagus degradans (strain 2-40 / ATCC 43961 / DSM 17024).